The sequence spans 261 residues: Vacuolar protein sorting-associated protein 37D (261 aa).

A VPS37 C-terminal domain is found at 93-182 (AENCADKLQR…RRRERSAQPA (90 aa)). Residues 172-261 (LRRRERSAQP…RPSQPEPPHR (90 aa)) form a disordered region. The segment covering 181 to 195 (PAPTTAAAAAAAATA) has biased composition (low complexity). Pro residues-rich tracts occupy residues 215-224 (GPPPAVPRSL) and 231-261 (PVPP…PPHR).

The protein belongs to the VPS37 family. In terms of assembly, component of the ESCRT-I complex (endosomal sorting complex required for transport I) which consists of TSG101, VPS28, a VPS37 protein (VPS37A to -D) and MVB12A or MVB12B in a 1:1:1:1 stoichiometry. Interacts with TSG101 and MVB12A. Component of the ESCRT-I complex (endosomal sorting complex required for transport I) which consists of TSG101, VPS28, a VPS37 protein (VPS37A to -D) and UBAP1 in a 1:1:1:1 stoichiometry.

It localises to the late endosome membrane. In terms of biological role, component of the ESCRT-I complex, a regulator of vesicular trafficking process. Required for the sorting of endocytic ubiquitinated cargos into multivesicular bodies. May be involved in cell growth and differentiation. This is Vacuolar protein sorting-associated protein 37D from Mus musculus (Mouse).